We begin with the raw amino-acid sequence, 201 residues long: uncharacterized protein (201 aa).

A helical membrane pass occupies residues 11–31 (IWKSLYLLIIVGMLYIGYILI).

Its subcellular location is the membrane. This is an uncharacterized protein from Rickettsia prowazekii (strain Madrid E).